The chain runs to 432 residues: GRAM domain-containing protein 2B (432 aa).

Met1 is subject to N-acetylmethionine. Disordered stretches follow at residues 1–61 (MTEL…SPDQ) and 74–106 (DGAS…SSQY). 2 stretches are compositionally biased toward basic and acidic residues: residues 9 to 39 (EDTK…EEKK) and 81 to 99 (DKND…ERKK). The GRAM domain maps to 110–177 (MHFHKLFLSV…FSVTLIKKTK (68 aa)). Over residues 220–233 (TSVGNSPNPSSAEN) the composition is skewed to polar residues. Residues 220-239 (TSVGNSPNPSSAENSFRADR) form a disordered region. Phosphoserine occurs at positions 225, 242, and 252. The disordered stretch occupies residues 262–285 (RQDMEGYSSSGSQTPESENSRDFH). A compositionally biased stretch (polar residues) spans 268-278 (YSSSGSQTPES).

This is GRAM domain-containing protein 2B (GRAMD2B) from Homo sapiens (Human).